The sequence spans 202 residues: MSRYTGPSWKVSRRLGISLTGTGKELARRPYAPGDHGQNNRRKISEYGMQLREKQKLRMMYGLTERQFSNLFVRAGKIREGLPGTNFMVLLERRLDNMVYRLGLATTRRQARQLVNHGHITVDGKRVDIPSYEVEIGQVIGVREKSKDLKIISEAVEAVVGRPQFVQFDADKLEGSLVRLPQRDELEADIDDSLIVEYYNKL.

The S4 RNA-binding domain occupies 93–156; that stretch reads RRLDNMVYRL…KDLKIISEAV (64 aa).

Belongs to the universal ribosomal protein uS4 family. As to quaternary structure, part of the 30S ribosomal subunit. Contacts protein S5. The interaction surface between S4 and S5 is involved in control of translational fidelity.

One of the primary rRNA binding proteins, it binds directly to 16S rRNA where it nucleates assembly of the body of the 30S subunit. Functionally, with S5 and S12 plays an important role in translational accuracy. The polypeptide is Small ribosomal subunit protein uS4 (Pediococcus pentosaceus (strain ATCC 25745 / CCUG 21536 / LMG 10740 / 183-1w)).